We begin with the raw amino-acid sequence, 350 residues long: Flap endonuclease 1 (350 aa).

The N-domain stretch occupies residues 1 to 101 (MGVNLRELIP…REVEERLRRK (101 aa)). Asp30, Asp83, Glu155, Glu157, Asp176, Asp178, and Asp239 together coordinate Mg(2+). The tract at residues 119-261 (EARKYAMMAA…TALRLVKSLG (143 aa)) is I-domain. An interaction with PCNA region spans residues 341–349 (RQSRLDMWF).

Belongs to the XPG/RAD2 endonuclease family. FEN1 subfamily. Interacts with PCNA. PCNA stimulates the nuclease activity without altering cleavage specificity. Mg(2+) is required as a cofactor.

Its function is as follows. Structure-specific nuclease with 5'-flap endonuclease and 5'-3' exonuclease activities involved in DNA replication and repair. During DNA replication, cleaves the 5'-overhanging flap structure that is generated by displacement synthesis when DNA polymerase encounters the 5'-end of a downstream Okazaki fragment. Binds the unpaired 3'-DNA end and kinks the DNA to facilitate 5' cleavage specificity. Cleaves one nucleotide into the double-stranded DNA from the junction in flap DNA, leaving a nick for ligation. Also involved in the base excision repair (BER) pathway. Acts as a genome stabilization factor that prevents flaps from equilibrating into structures that lead to duplications and deletions. Also possesses 5'-3' exonuclease activity on nicked or gapped double-stranded DNA. This chain is Flap endonuclease 1, found in Aeropyrum pernix (strain ATCC 700893 / DSM 11879 / JCM 9820 / NBRC 100138 / K1).